The following is a 330-amino-acid chain: D-lactate dehydrogenase (330 aa).

NAD(+)-binding positions include 156-157, aspartate 176, 206-207, 233-235, and aspartate 259; these read RI, VP, and AAR. Arginine 235 is a catalytic residue. Glutamate 264 is an active-site residue. The active-site Proton donor is the histidine 296.

This sequence belongs to the D-isomer specific 2-hydroxyacid dehydrogenase family.

It carries out the reaction (R)-lactate + NAD(+) = pyruvate + NADH + H(+). This is D-lactate dehydrogenase (ldhD) from Staphylococcus epidermidis (strain ATCC 35984 / DSM 28319 / BCRC 17069 / CCUG 31568 / BM 3577 / RP62A).